We begin with the raw amino-acid sequence, 186 residues long: MKRLIFMGPPGAGKGTQADIIKEKYNIPQISTGDILRAAVKNGTAMGIEAKKYMDAGDLVPDAVVIGIIRDRLVEADCANGFILDGFPRTVEQAKALSEILKELHMELDSVVNLDVPDEELVKRLLGRAIKEGRSDDNEETIKNRLHTYNTKTLPLIDFYKATGILRQINGLGSMEEITNTILKSI.

ATP is bound at residue 11-16 (GAGKGT). The interval 31 to 60 (STGDILRAAVKNGTAMGIEAKKYMDAGDLV) is NMP. Residues Thr32, Arg37, 58–60 (DLV), 86–89 (GFPR), and Gln93 each bind AMP. An LID region spans residues 127–137 (GRAIKEGRSDD). Residue Arg128 participates in ATP binding. Residues Arg134 and Arg145 each contribute to the AMP site. Gly173 contacts ATP.

The protein belongs to the adenylate kinase family. Monomer.

It is found in the cytoplasm. The enzyme catalyses AMP + ATP = 2 ADP. It participates in purine metabolism; AMP biosynthesis via salvage pathway; AMP from ADP: step 1/1. Functionally, catalyzes the reversible transfer of the terminal phosphate group between ATP and AMP. Plays an important role in cellular energy homeostasis and in adenine nucleotide metabolism. In Leptospira biflexa serovar Patoc (strain Patoc 1 / Ames), this protein is Adenylate kinase.